Consider the following 991-residue polypeptide: MTVGKRKLSNGTVNEAKRLDDHVPVVAPSTNPDFENANGEDNEDIDDYSSEGEMSPQLENYFPQTTSWQKTITKVVKSVVSIQFSHVSNFDTESSAVSEATGFVVDSERGYILTNRHVVGPGPFCGYVVFDNHEEAVVRPIYRDPIHDFGFLQFDPKDIRYMKIEQLDLRPDLAQVGTEIRVVGNDAGEKLSILAGFISRLDRNAPDYGTLSYNDFNTEYIQAAASASGGSSGSPVVNKEGYAVALQAGGSTEASTDFFLPVYRPLRALQCIQQGQTITRGDIQVEWQLKPFDECRRLGLTPEAEAAARSQFPDKIGLLVAELVLPEGPADGKLKEGDTLISINGTPIASFISVDEILDEQVGQSLKFVIQRNGHEVSFDIVVGDLHSITPSRYVDIAGASFNDLSYQVARCFCIPVRGVFINDGSGSFELSPFEKNGWLLEYVDDKPTPNLDAFVEVMKSIPDRKKVSISYRHVSDFHTENITVIYVERHWQSTFRMAVRNDSTGIWDFTDIQDKPLPAEEPVPQNAKYIDIPFDDPEKSGCSQLTRSFVQVRTIAPVPVDSYPYRREIGYGVVVDAANGYVLVSRRFVPHDMCDIFVIFAESVELPGKVVFLHPNQNYAIVKYDPKLMLADVKTPKFSDKPLKRGERAFFVGYNYNLRVVTDDVKVSSVSSINVPVASLSPRYRGTNLECILLDSKLSQECDSGVLADYDGTLRAFWITYLGETNCDQTNDRVYRMGLDVTDVMSVIKSLHENKVPAGLRILDAEFASMTIFQGRLRGVPQEWISKFEEVCEDEMKFLAVDRVSAPALGQVATPLKTGDIVMSVNGSIVKTMRDLGIMYNQDSLDFVVIRQKKELHLNVPTIDTSTLNTSHVVFWCGSILQAPHHGVRQLIEKIPSEIYVTKKNSGGPANQYGIATNSFITHVNDTETKTLESFVSVVKGIPDNTYIKLRLVSFDSIPVAISVKTNYHYFPTFELKKVNGEWEETEHKV.

The interval 1–57 is disordered; the sequence is MTVGKRKLSNGTVNEAKRLDDHVPVVAPSTNPDFENANGEDNEDIDDYSSEGEMSPQ. The segment covering 38 to 50 has biased composition (acidic residues); sequence NGEDNEDIDDYSS. Residues 86–269 are serine protease; that stretch reads HVSNFDTESS…LPVYRPLRAL (184 aa). Active-site charge relay system residues include His-117, Asp-148, and Ser-231. 2 PDZ domains span residues 296–374 and 885–957; these read RRLG…QRNG and PHHG…VSFD.

Belongs to the peptidase S1C family.

It localises to the nucleus. In terms of biological role, nuclear serine protease which mediates apoptosis. This Meyerozyma guilliermondii (strain ATCC 6260 / CBS 566 / DSM 6381 / JCM 1539 / NBRC 10279 / NRRL Y-324) (Yeast) protein is Pro-apoptotic serine protease NMA111 (NMA111).